Reading from the N-terminus, the 671-residue chain is E3 ubiquitin-protein ligase pub2 (671 aa).

The region spanning M1–L112 is the C2 domain. The WW domain maps to G242 to D275. Residues S338–E671 enclose the HECT domain. The Glycyl thioester intermediate role is filled by C639.

In terms of assembly, interacts with the E2 ubiquitin-conjugating enzyme ubc4.

The protein resides in the membrane. Its subcellular location is the cytoplasm. The enzyme catalyses S-ubiquitinyl-[E2 ubiquitin-conjugating enzyme]-L-cysteine + [acceptor protein]-L-lysine = [E2 ubiquitin-conjugating enzyme]-L-cysteine + N(6)-ubiquitinyl-[acceptor protein]-L-lysine.. It participates in protein modification; protein ubiquitination. Functionally, E3 ubiquitin-protein ligase which accepts ubiquitin from an E2 ubiquitin-conjugating enzyme in the form of a thioester and then directly transfers the ubiquitin to targeted substrates. This chain is E3 ubiquitin-protein ligase pub2 (pub2), found in Schizosaccharomyces pombe (strain 972 / ATCC 24843) (Fission yeast).